The chain runs to 183 residues: Ribose 1,5-bisphosphate phosphokinase PhnN (183 aa).

6–13 (GPSGAGKD) serves as a coordination point for ATP.

It belongs to the ribose 1,5-bisphosphokinase family.

The enzyme catalyses alpha-D-ribose 1,5-bisphosphate + ATP = 5-phospho-alpha-D-ribose 1-diphosphate + ADP. Its pathway is metabolic intermediate biosynthesis; 5-phospho-alpha-D-ribose 1-diphosphate biosynthesis; 5-phospho-alpha-D-ribose 1-diphosphate from D-ribose 5-phosphate (route II): step 3/3. In terms of biological role, catalyzes the phosphorylation of ribose 1,5-bisphosphate to 5-phospho-D-ribosyl alpha-1-diphosphate (PRPP). This Agrobacterium fabrum (strain C58 / ATCC 33970) (Agrobacterium tumefaciens (strain C58)) protein is Ribose 1,5-bisphosphate phosphokinase PhnN.